A 351-amino-acid polypeptide reads, in one-letter code: Phospho-N-acetylmuramoyl-pentapeptide-transferase (351 aa).

10 helical membrane-spanning segments follow: residues 17–37, 62–82, 85–105, 130–150, 158–178, 190–210, 230–250, 254–274, 279–299, and 328–348; these read MAYA…YIIL, GIPT…LVFW, ILNV…FLGF, IIFS…HVSV, SFQI…LISA, GLAI…AYLT, LVIF…FNAY, IMMG…AALI, ILFS…IIQV, and QVVI…LSTI.

The protein belongs to the glycosyltransferase 4 family. MraY subfamily. The cofactor is Mg(2+).

The protein resides in the cell inner membrane. The enzyme catalyses UDP-N-acetyl-alpha-D-muramoyl-L-alanyl-gamma-D-glutamyl-meso-2,6-diaminopimeloyl-D-alanyl-D-alanine + di-trans,octa-cis-undecaprenyl phosphate = di-trans,octa-cis-undecaprenyl diphospho-N-acetyl-alpha-D-muramoyl-L-alanyl-D-glutamyl-meso-2,6-diaminopimeloyl-D-alanyl-D-alanine + UMP. The protein operates within cell wall biogenesis; peptidoglycan biosynthesis. In terms of biological role, catalyzes the initial step of the lipid cycle reactions in the biosynthesis of the cell wall peptidoglycan: transfers peptidoglycan precursor phospho-MurNAc-pentapeptide from UDP-MurNAc-pentapeptide onto the lipid carrier undecaprenyl phosphate, yielding undecaprenyl-pyrophosphoryl-MurNAc-pentapeptide, known as lipid I. This is Phospho-N-acetylmuramoyl-pentapeptide-transferase from Borreliella burgdorferi (strain ATCC 35210 / DSM 4680 / CIP 102532 / B31) (Borrelia burgdorferi).